The primary structure comprises 149 residues: Probable flagellum biosynthesis repressor protein FlbT (149 aa).

The protein belongs to the FlbT family.

Has a post-transcriptional repressor function in flagellum biogenesis. Associates with the 5'-UTR of fljK mRNA and promotes its degradation. In Rhizobium johnstonii (strain DSM 114642 / LMG 32736 / 3841) (Rhizobium leguminosarum bv. viciae), this protein is Probable flagellum biosynthesis repressor protein FlbT.